We begin with the raw amino-acid sequence, 206 residues long: MGGKWSKSSVIGWPTVRERMRRAEPAADRVGAASRDLEKHGAITSSNTAATNAACAWLEAQEEEEVGFPVTPQVPLRPMTYKAAVDLSHFLKEKGGLEGLIHSQRRQDILDLWIYHTQGYFPDWQNYTPGPGVRYPLTFGWCYKLVPVEPDKIEEANKGENTSLLHPVSLHGMDDPEREVLEWRFDSRLAFHHVARELHPEYFKNC.

Residue G2 is the site of N-myristoyl glycine; by host attachment. S6 is subject to Phosphoserine; by host. An acidic; interacts with host PACS1 and PACS2; stabilizes the interaction of NEF/MHC-I with host AP1M1; necessary for MHC-I internalization region spans residues E62–E65. The SH3-binding; interaction with Src family tyrosine kinases stretch occupies residues P69–P78. Positions P72–P75 match the PxxP; stabilizes the interaction of NEF/MHC-I with host AP1M1; necessary for MHC-I internalization motif. A mediates dimerization, Nef-PTE1 interaction region spans residues D108 to W124. Positions V148 to V180 are binding to ATP6V1H. Residues L164–L165 carry the Dileucine internalization motif; necessary for CD4 internalization motif. The Diacidic; necessary for CD4 internalization signature appears at D174–D175.

The protein belongs to the lentivirus primate group Nef protein family. As to quaternary structure, monomer; cytosolic form. Homodimer; membrane bound form. Interacts with Nef associated p21-activated kinase (PAK2); this interaction activates PAK2. Associates with the Nef-MHC-I-AP1 complex; this complex is required for MHC-I internalization. Interacts (via C-terminus) with host PI3-kinase. Interacts with host PACS1; this interaction seems to be weak. Interacts with host PACS2. Interacts with host LCK and MAPK3; these interactions inhibit the kinase activity of the latter. Interacts with host ATP6V1H; this interaction may play a role in CD4 endocytosis. Associates with the CD4-Nef-AP2 complex; this complex is required for CD4 internalization. Interacts with host AP2 subunit alpha and AP2 subunit sigma2. Interacts with TCR-zeta chain; this interaction up-regulates the Fas ligand (FasL) surface expression. Interacts with host HCK, LYN, and SRC; these interactions activate the Src family kinases. Interacts with MAP3K5; this interaction inhibits the Fas and TNFR-mediated death signals. Interacts with beta-COP and PTE1. Interacts with human RACK1; this increases Nef phosphorylation by PKC. Interacts with TP53; this interaction decreases the half-life of TP53, protecting the infected cell against p53-mediated apoptosis. In terms of processing, phosphorylated on serine residues, probably by host PKCdelta and theta. Post-translationally, myristoylated. The virion-associated Nef proteins are cleaved by the viral protease to release the soluble C-terminal core protein. Nef is probably cleaved concomitantly with viral structural proteins on maturation of virus particles.

It is found in the host cell membrane. The protein resides in the virion. It localises to the secreted. The protein localises to the host Golgi apparatus membrane. Factor of infectivity and pathogenicity, required for optimal virus replication. Alters numerous pathways of T-lymphocyte function and down-regulates immunity surface molecules in order to evade host defense and increase viral infectivity. Alters the functionality of other immunity cells, like dendritic cells, monocytes/macrophages and NK cells. Functionally, in infected CD4(+) T-lymphocytes, down-regulates the surface MHC-I, mature MHC-II, CD4, CD28, CCR5 and CXCR4 molecules. Mediates internalization and degradation of host CD4 through the interaction of with the cytoplasmic tail of CD4, the recruitment of AP-2 (clathrin adapter protein complex 2), internalization through clathrin coated pits, and subsequent transport to endosomes and lysosomes for degradation. Diverts host MHC-I molecules to the trans-Golgi network-associated endosomal compartments by an endocytic pathway to finally target them for degradation. MHC-I down-regulation may involve AP-1 (clathrin adapter protein complex 1) or possibly Src family kinase-ZAP70/Syk-PI3K cascade recruited by PACS2. In consequence infected cells are masked for immune recognition by cytotoxic T-lymphocytes. Decreasing the number of immune receptors also prevents reinfection by more HIV particles (superinfection). Down-regulates host SERINC3 and SERINC5 thereby excluding these proteins from the viral particles. Virion infectivity is drastically higher when SERINC3 or SERINC5 are excluded from the viral envelope, because these host antiviral proteins impair the membrane fusion event necessary for subsequent virion penetration. Its function is as follows. Bypasses host T-cell signaling by inducing a transcriptional program nearly identical to that of anti-CD3 cell activation. Interaction with TCR-zeta chain up-regulates the Fas ligand (FasL). Increasing surface FasL molecules and decreasing surface MHC-I molecules on infected CD4(+) cells send attacking cytotoxic CD8+ T-lymphocytes into apoptosis. In terms of biological role, plays a role in optimizing the host cell environment for viral replication without causing cell death by apoptosis. Protects the infected cells from apoptosis in order to keep them alive until the next virus generation is ready to strike. Inhibits the Fas and TNFR-mediated death signals by blocking MAP3K5/ASK1. Decreases the half-life of TP53, protecting the infected cell against p53-mediated apoptosis. Inhibits the apoptotic signals regulated by the Bcl-2 family proteins through the formation of a Nef/PI3-kinase/PAK2 complex that leads to activation of PAK2 and induces phosphorylation of Bad. Extracellular Nef protein targets CD4(+) T-lymphocytes for apoptosis by interacting with CXCR4 surface receptors. The chain is Protein Nef from Human immunodeficiency virus type 1 group M subtype B (isolate HXB2) (HIV-1).